We begin with the raw amino-acid sequence, 102 residues long: Integration host factor subunit beta (102 aa).

This sequence belongs to the bacterial histone-like protein family. As to quaternary structure, heterodimer of an alpha and a beta chain.

Its function is as follows. This protein is one of the two subunits of integration host factor, a specific DNA-binding protein that functions in genetic recombination as well as in transcriptional and translational control. The polypeptide is Integration host factor subunit beta (Marinomonas sp. (strain MWYL1)).